Consider the following 199-residue polypeptide: uncharacterized protein (199 aa).

The Nudix hydrolase domain occupies 38-169 (NRRAAVLIPI…SLDIHREGIN (132 aa)). The short motif at 76–98 (GKADPDDQSLISTALREAEEEVA) is the Nudix box element. Mg(2+) contacts are provided by E92 and E96.

This sequence belongs to the Nudix hydrolase family. PCD1 subfamily. Requires Mn(2+) as cofactor. It depends on Mg(2+) as a cofactor.

Probably mediates the hydrolysis of some nucleoside diphosphate derivatives. This is an uncharacterized protein from Yersinia pseudotuberculosis serotype I (strain IP32953).